The chain runs to 228 residues: Phosphoribosylformylglycinamidine synthase subunit PurQ (228 aa).

The region spanning 4–226 (AVVVFPGSNC…VNYWRETHVV (223 aa)) is the Glutamine amidotransferase type-1 domain. Catalysis depends on cysteine 86, which acts as the Nucleophile. Active-site residues include histidine 195 and glutamate 197.

In terms of assembly, part of the FGAM synthase complex composed of 1 PurL, 1 PurQ and 2 PurS subunits.

It is found in the cytoplasm. It carries out the reaction N(2)-formyl-N(1)-(5-phospho-beta-D-ribosyl)glycinamide + L-glutamine + ATP + H2O = 2-formamido-N(1)-(5-O-phospho-beta-D-ribosyl)acetamidine + L-glutamate + ADP + phosphate + H(+). The enzyme catalyses L-glutamine + H2O = L-glutamate + NH4(+). It functions in the pathway purine metabolism; IMP biosynthesis via de novo pathway; 5-amino-1-(5-phospho-D-ribosyl)imidazole from N(2)-formyl-N(1)-(5-phospho-D-ribosyl)glycinamide: step 1/2. In terms of biological role, part of the phosphoribosylformylglycinamidine synthase complex involved in the purines biosynthetic pathway. Catalyzes the ATP-dependent conversion of formylglycinamide ribonucleotide (FGAR) and glutamine to yield formylglycinamidine ribonucleotide (FGAM) and glutamate. The FGAM synthase complex is composed of three subunits. PurQ produces an ammonia molecule by converting glutamine to glutamate. PurL transfers the ammonia molecule to FGAR to form FGAM in an ATP-dependent manner. PurS interacts with PurQ and PurL and is thought to assist in the transfer of the ammonia molecule from PurQ to PurL. The polypeptide is Phosphoribosylformylglycinamidine synthase subunit PurQ (Geobacillus kaustophilus (strain HTA426)).